The sequence spans 221 residues: Transmembrane emp24 domain-containing protein 3 (221 aa).

Positions 1 to 30 (MGNEVPRASSFQMLMLLLLLLLLRAERLRG) are cleaved as a signal peptide. Topologically, residues 31–184 (AELTFELPDN…RAEDLNSRVS (154 aa)) are lumenal. In terms of domain architecture, GOLD spans 42–124 (KQCFHEEVEQ…HKTVYFDFQV (83 aa)). Dimethylated arginine is present on arginine 103. Residues 185 to 205 (YWSVGETIALFVVSFSQVLLL) traverse the membrane as a helical segment. The Cytoplasmic segment spans residues 206-221 (KSFFTEKRPINRAVHS). Residues 208-209 (FF) carry the COPII vesicle coat-binding motif. Residues 208 to 221 (FFTEKRPINRAVHS) carry the COPI vesicle coat-binding motif.

This sequence belongs to the EMP24/GP25L family. In terms of assembly, monomer in endoplasmic reticulum, endoplasmic reticulum-Golgi intermediate compartment and cis-Golgi network. Interacts (via C-terminus) with COPG1; the interaction involves dimeric TMED3; however, there are conflicting reports on the interaction. Interacts with GORASP1 and GORASP2.

The protein resides in the endoplasmic reticulum-Golgi intermediate compartment membrane. It is found in the golgi apparatus. Its subcellular location is the cis-Golgi network membrane. It localises to the golgi stack membrane. The protein localises to the endoplasmic reticulum membrane. The protein resides in the cytoplasmic vesicle. It is found in the COPI-coated vesicle membrane. In terms of biological role, potential role in vesicular protein trafficking, mainly in the early secretory pathway. Contributes to the coupled localization of TMED2 and TMED10 in the cis-Golgi network. In Rattus norvegicus (Rat), this protein is Transmembrane emp24 domain-containing protein 3 (Tmed3).